The following is a 337-amino-acid chain: ATP-dependent 6-phosphofructokinase (337 aa).

G11 is a binding site for ATP. 21–25 provides a ligand contact to ADP; it reads RAVVR. ATP is bound by residues 72 to 73 and 102 to 105; these read RY and GDGS. D103 provides a ligand contact to Mg(2+). A substrate-binding site is contributed by 125 to 127; sequence TID. The active-site Proton acceptor is the D127. R154 contacts ADP. Residues R162 and 169-171 contribute to the substrate site; that span reads MGR. ADP-binding positions include 185-187 and 214-216; these read GAD and KNH. Residues E223, R245, and 251–254 each bind substrate; that span reads HILR.

It belongs to the phosphofructokinase type A (PFKA) family. ATP-dependent PFK group I subfamily. Prokaryotic clade 'B1' sub-subfamily. As to quaternary structure, homotetramer. Mg(2+) is required as a cofactor.

The protein resides in the cytoplasm. The enzyme catalyses beta-D-fructose 6-phosphate + ATP = beta-D-fructose 1,6-bisphosphate + ADP + H(+). It functions in the pathway carbohydrate degradation; glycolysis; D-glyceraldehyde 3-phosphate and glycerone phosphate from D-glucose: step 3/4. Allosterically activated by ADP and other diphosphonucleosides, and allosterically inhibited by phosphoenolpyruvate. Its function is as follows. Catalyzes the phosphorylation of D-fructose 6-phosphate to fructose 1,6-bisphosphate by ATP, the first committing step of glycolysis. This Streptococcus uberis (strain ATCC BAA-854 / 0140J) protein is ATP-dependent 6-phosphofructokinase.